The following is a 183-amino-acid chain: Large ribosomal subunit protein uL10 (183 aa).

Belongs to the universal ribosomal protein uL10 family. Part of the ribosomal stalk of the 50S ribosomal subunit. The N-terminus interacts with L11 and the large rRNA to form the base of the stalk. The C-terminus forms an elongated spine to which L12 dimers bind in a sequential fashion forming a multimeric L10(L12)X complex.

Its function is as follows. Forms part of the ribosomal stalk, playing a central role in the interaction of the ribosome with GTP-bound translation factors. This chain is Large ribosomal subunit protein uL10, found in Mesomycoplasma hyopneumoniae (strain 7448) (Mycoplasma hyopneumoniae).